The primary structure comprises 663 residues: DNA topoisomerase 4 subunit B (663 aa).

ATP is bound by residues tyrosine 7, asparagine 47, aspartate 74, glycine 114 to alanine 120, and lysine 341. A disordered region spans residues arginine 386–alanine 416. Over residues glutamate 387 to serine 398 the composition is skewed to basic and acidic residues. The Toprim domain maps to asparagine 424 to proline 538. Residues glutamate 430, aspartate 503, and aspartate 505 each contribute to the Mg(2+) site.

It belongs to the type II topoisomerase family. ParE type 2 subfamily. Heterotetramer composed of ParC and ParE. It depends on Mg(2+) as a cofactor. The cofactor is Mn(2+). Ca(2+) serves as cofactor.

It carries out the reaction ATP-dependent breakage, passage and rejoining of double-stranded DNA.. Functionally, topoisomerase IV is essential for chromosome segregation. It relaxes supercoiled DNA. Performs the decatenation events required during the replication of a circular DNA molecule. This chain is DNA topoisomerase 4 subunit B, found in Staphylococcus aureus (strain Mu50 / ATCC 700699).